The following is a 415-amino-acid chain: MSILETFDPAVANAIRLETERQEYNLELIASENFVSEAVMEAQGSVLTNKYAEGYPGKRYYGGCHNVDIVENLAIERAKELFGAEHANVQPHSGSQANMAVYFTVLKPGDTVLGMNLAHGGHLTHGSPVNFSGKFFNIVPYGVTRENQTIDYDEVERLTLEHKPKMIVVGASAYPRIIDFAAFRKVADKVGAVVMVDMAHIAGLVAAGLHPSPVPHAEFVTTTTHKTLRGPRGGMILCREEFAKALNSNIFPGIQGGPLMHAIAAKAVAFKEALAPEFKTYQEQIVKNAKALAAGLVKQGFKLTSGGTDNHLMLVDLSETQLTGKVAEEALDKAGITVNKNGIPFDTRSPFITSGIRIGTPAATTHGLKEANMEEVAVLIADALANVENETKLAEVKGRVNAMMKRFPLYAHRLA.

Residues L117 and G121–L123 each bind (6S)-5,6,7,8-tetrahydrofolate. K226 is subject to N6-(pyridoxal phosphate)lysine. (6S)-5,6,7,8-tetrahydrofolate-binding positions include E241 and S349–F351.

This sequence belongs to the SHMT family. Homodimer. The cofactor is pyridoxal 5'-phosphate.

It is found in the cytoplasm. It carries out the reaction (6R)-5,10-methylene-5,6,7,8-tetrahydrofolate + glycine + H2O = (6S)-5,6,7,8-tetrahydrofolate + L-serine. Its pathway is one-carbon metabolism; tetrahydrofolate interconversion. It functions in the pathway amino-acid biosynthesis; glycine biosynthesis; glycine from L-serine: step 1/1. Its function is as follows. Catalyzes the reversible interconversion of serine and glycine with tetrahydrofolate (THF) serving as the one-carbon carrier. This reaction serves as the major source of one-carbon groups required for the biosynthesis of purines, thymidylate, methionine, and other important biomolecules. Also exhibits THF-independent aldolase activity toward beta-hydroxyamino acids, producing glycine and aldehydes, via a retro-aldol mechanism. The chain is Serine hydroxymethyltransferase from Geotalea uraniireducens (strain Rf4) (Geobacter uraniireducens).